The primary structure comprises 466 residues: Dihydrolipoyl dehydrogenase (466 aa).

FAD contacts are provided by residues 34–42 (ERVHLGGIC), K51, and G114. A disulfide bridge links C42 with C47. NAD(+) is bound by residues 180 to 184 (GSGAI), E203, and 269 to 272 (AIGV). Residues D311 and A319 each coordinate FAD. H445 serves as the catalytic Proton acceptor.

This sequence belongs to the class-I pyridine nucleotide-disulfide oxidoreductase family. As to quaternary structure, homodimer. It depends on FAD as a cofactor.

The protein localises to the cytoplasm. The catalysed reaction is N(6)-[(R)-dihydrolipoyl]-L-lysyl-[protein] + NAD(+) = N(6)-[(R)-lipoyl]-L-lysyl-[protein] + NADH + H(+). Functionally, lipoamide dehydrogenase is a component of the alpha-ketoacid dehydrogenase complexes. This Zymomonas mobilis subsp. mobilis (strain ATCC 31821 / ZM4 / CP4) protein is Dihydrolipoyl dehydrogenase (lpd).